The following is a 317-amino-acid chain: Ribose-phosphate pyrophosphokinase A (317 aa).

Mg(2+) contacts are provided by Asp130, His132, and Asp145. Residues 212-227 (KDKVALIVDDMADTCG) form a binding of phosphoribosylpyrophosphate region.

The protein belongs to the ribose-phosphate pyrophosphokinase family. Mg(2+) serves as cofactor.

The catalysed reaction is D-ribose 5-phosphate + ATP = 5-phospho-alpha-D-ribose 1-diphosphate + AMP + H(+). It functions in the pathway metabolic intermediate biosynthesis; 5-phospho-alpha-D-ribose 1-diphosphate biosynthesis; 5-phospho-alpha-D-ribose 1-diphosphate from D-ribose 5-phosphate (route I): step 1/1. This is Ribose-phosphate pyrophosphokinase A (prsA) from Dictyostelium discoideum (Social amoeba).